Reading from the N-terminus, the 106-residue chain is MNSILGLIDTVTNTVGKGQQIELDKAALGQQRELALQRMSLDRQALNNQVEQFNKLLEQRVHGPIQSVRLARAAGFRVDPYSYTNQNFYDDQLNAIRLSYRNLFKN.

Belongs to the vesivirus VP2 protein family. Homooligomer. The portal-like structure consists in 12 copies of VP2. Interacts with capsid protein VP1.

The protein localises to the virion. It localises to the host cytoplasm. Functionally, minor structural protein that forms a portal-like structure at a unique three-fold axis of symmetry, following binding to the host receptor. The virion attaches to feline junctional adhesion molecule A (F11R). Once attached, the virion is endocytosed. Acidification of the endosome induces conformational change of capsid protein thereby injecting virus genomic RNA into host cytoplasm. The channel formed by VP2 may allow the delivery of the viral genome through the host endosomal membrane. The sequence is that of Minor capsid protein VP2 from Feline calicivirus (strain Japanese F4) (FCV).